A 160-amino-acid polypeptide reads, in one-letter code: MVPSAGQFALFALGILLAVCQALENSTSALSADPPIAAAVVSHFNDCPDSHSQFCFHGTCRFLVQEDKPACVCHSGYVGARCEHADLLAVVAASQKKQAITALVVVSIVALAVLIITCVLIHCCQVRKHCEWCRALICRHEKPSALLKGRTACCHSETVV.

The N-terminal stretch at 1-23 is a signal peptide; the sequence is MVPSAGQFALFALGILLAVCQAL. A propeptide spans 24 to 39 (removed in mature form); that stretch reads ENSTSALSADPPIAAA. The Extracellular segment spans residues 24-98; sequence ENSTSALSAD…AVVAASQKKQ (75 aa). Asn-25 is a glycosylation site (N-linked (GlcNAc...) asparagine). An EGF-like domain is found at 43 to 83; that stretch reads HFNDCPDSHSQFCFHGTCRFLVQEDKPACVCHSGYVGARCE. Disulfide bonds link Cys-47–Cys-60, Cys-55–Cys-71, and Cys-73–Cys-82. Residues 90-160 constitute a propeptide, removed in mature form; sequence VVAASQKKQA…TACCHSETVV (71 aa). A helical membrane pass occupies residues 99 to 124; it reads AITALVVVSIVALAVLIITCVLIHCC. The Cytoplasmic segment spans residues 125 to 160; that stretch reads QVRKHCEWCRALICRHEKPSALLKGRTACCHSETVV. Residues Cys-153 and Cys-154 are each lipidated (S-palmitoyl cysteine).

In terms of assembly, interacts with the PDZ domains of MAGI3, SDCBP and SNTA1. The interaction with SDCBP, is required for the targeting to the cell surface. In the endoplasmic reticulum, in its immature form (i.e. with a prosegment and lacking full N-glycosylation), interacts with CNIH. In the Golgi apparatus, may form a complex with CNIH and GORASP2. Interacts (via cytoplasmic C-terminal domain) with NKD2.

The protein localises to the secreted. It is found in the extracellular space. Its subcellular location is the cell membrane. In terms of biological role, TGF alpha is a mitogenic polypeptide that is able to bind to the EGF receptor/EGFR and to act synergistically with TGF beta to promote anchorage-independent cell proliferation in soft agar. The sequence is that of Protransforming growth factor alpha (TGFA) from Sus scrofa (Pig).